The following is a 122-amino-acid chain: Large ribosomal subunit protein bL12 (122 aa).

The protein belongs to the bacterial ribosomal protein bL12 family. In terms of assembly, homodimer. Part of the ribosomal stalk of the 50S ribosomal subunit. Forms a multimeric L10(L12)X complex, where L10 forms an elongated spine to which 2 to 4 L12 dimers bind in a sequential fashion. Binds GTP-bound translation factors.

In terms of biological role, forms part of the ribosomal stalk which helps the ribosome interact with GTP-bound translation factors. Is thus essential for accurate translation. This chain is Large ribosomal subunit protein bL12, found in Histophilus somni (strain 129Pt) (Haemophilus somnus).